The following is a 937-amino-acid chain: C-1-tetrahydrofolate synthase, cytoplasmic (937 aa).

Residues 1 to 309 (MALLLEGTSL…TLLPLKLQTP (309 aa)) form a methylenetetrahydrofolate dehydrogenase and cyclohydrolase region. Residues 50–54 (YVRMK) and 97–99 (VQL) contribute to the substrate site. NADP(+) contacts are provided by residues 168-170 (GRS) and Ser-193. Substrate is bound at residue 268–272 (PGSVG). The formyltetrahydrofolate synthetase stretch occupies residues 310 to 937 (VPSDIEIARS…AENGDIVGLS (628 aa)). ATP is bound at residue 374 to 381 (TPFGEGKS).

The protein in the N-terminal section; belongs to the tetrahydrofolate dehydrogenase/cyclohydrolase family. It in the C-terminal section; belongs to the formate--tetrahydrofolate ligase family. In terms of assembly, homodimer.

The protein resides in the cytoplasm. It catalyses the reaction (6R)-5,10-methylene-5,6,7,8-tetrahydrofolate + NADP(+) = (6R)-5,10-methenyltetrahydrofolate + NADPH. The enzyme catalyses (6R)-5,10-methenyltetrahydrofolate + H2O = (6R)-10-formyltetrahydrofolate + H(+). The catalysed reaction is (6S)-5,6,7,8-tetrahydrofolate + formate + ATP = (6R)-10-formyltetrahydrofolate + ADP + phosphate. The protein operates within one-carbon metabolism; tetrahydrofolate interconversion. The protein is C-1-tetrahydrofolate synthase, cytoplasmic of Schizosaccharomyces pombe (strain 972 / ATCC 24843) (Fission yeast).